Reading from the N-terminus, the 242-residue chain is MSETKITYDDFNPHAFETLDITDETKGAREVIRWAYDVYGDSIIYSCSFGAEGMILIDLISSVKKDAEIVFLDTNLHFQETYDLIDRVKARYPELNIKLKQPSLTLEEQADQVAPALWKQDPNQCCYIRKIKPLEEVLSGATAWVSGLRREQSPSRQATNFINKDERFKSVKVCPLIHWTWDDVWDYIKAHDLHYNELHDFNFPSIGCIPCTEAVSGNGDSRAGRWTNSTKTECGLHTTNKP.

[4Fe-4S] cluster contacts are provided by C125, C126, C208, and C211. The active-site Nucleophile; cysteine thiosulfonate intermediate is the C234.

The protein belongs to the PAPS reductase family. CysH subfamily. It depends on [4Fe-4S] cluster as a cofactor.

The protein resides in the cytoplasm. It catalyses the reaction [thioredoxin]-disulfide + sulfite + AMP + 2 H(+) = adenosine 5'-phosphosulfate + [thioredoxin]-dithiol. It participates in sulfur metabolism; hydrogen sulfide biosynthesis; sulfite from sulfate. Functionally, catalyzes the formation of sulfite from adenosine 5'-phosphosulfate (APS) using thioredoxin as an electron donor. This chain is Adenosine 5'-phosphosulfate reductase, found in Staphylococcus saprophyticus subsp. saprophyticus (strain ATCC 15305 / DSM 20229 / NCIMB 8711 / NCTC 7292 / S-41).